A 156-amino-acid polypeptide reads, in one-letter code: 6,7-dimethyl-8-ribityllumazine synthase (156 aa).

5-amino-6-(D-ribitylamino)uracil-binding positions include Phe23, 57–59 (AYE), and 81–83 (AII). 86-87 (GT) lines the (2S)-2-hydroxy-3-oxobutyl phosphate pocket. His89 (proton donor) is an active-site residue. Phe114 contacts 5-amino-6-(D-ribitylamino)uracil. Arg128 provides a ligand contact to (2S)-2-hydroxy-3-oxobutyl phosphate.

This sequence belongs to the DMRL synthase family.

The catalysed reaction is (2S)-2-hydroxy-3-oxobutyl phosphate + 5-amino-6-(D-ribitylamino)uracil = 6,7-dimethyl-8-(1-D-ribityl)lumazine + phosphate + 2 H2O + H(+). It functions in the pathway cofactor biosynthesis; riboflavin biosynthesis; riboflavin from 2-hydroxy-3-oxobutyl phosphate and 5-amino-6-(D-ribitylamino)uracil: step 1/2. Catalyzes the formation of 6,7-dimethyl-8-ribityllumazine by condensation of 5-amino-6-(D-ribitylamino)uracil with 3,4-dihydroxy-2-butanone 4-phosphate. This is the penultimate step in the biosynthesis of riboflavin. This Helicobacter pylori (strain G27) protein is 6,7-dimethyl-8-ribityllumazine synthase.